A 207-amino-acid chain; its full sequence is Ras-related protein Rab-8A (207 aa).

GTP is bound by residues Ser17, Gly18, Val19, Gly20, Lys21, Thr22, Cys23, Ser35, Ser39, and Thr40. Thr22 provides a ligand contact to Mg(2+). 2 short sequence motifs (switch) span residues 31–45 (DAFN…GIDF) and 63–80 (DTAG…YYRG). Thr40 and Asp63 together coordinate Mg(2+). Gly66 contributes to the GTP binding site. At Thr72 the chain carries Phosphothreonine; by LRRK2. Asn121, Lys122, Asp124, Ala152, and Lys153 together coordinate GTP. Phosphoserine is present on residues Ser181 and Ser185. At Cys204 the chain carries Cysteine methyl ester. Cys204 carries S-geranylgeranyl cysteine lipidation. The propeptide at 205 to 207 (SLL) is removed in mature form.

The protein belongs to the small GTPase superfamily. Rab family. In terms of assembly, interacts (GTP-bound form) with MICALL1; regulates RAB8A association with recycling endosomes. Interacts with MICALL2; competes with RAB13 and is involved in E-cadherin endocytic recycling. Interacts (GTP-bound form) with MICAL1, MICALCL, MICAL3 and EHBP1L1; two molecules of RAB8A can bind to one molecule of the effector protein; ternary complexes of RAB8A, RAB13 and either MICAL1 or EHBP1L1 are possible. Interacts (GTP-bound form) with EHBP1. Interacts with EHD1. Interacts with MAP4K2 and SYTL4. Interacts with SGSM1 and SGSM3. Interacts with RABIF, RIMS2, RPH3A and RPH3A. Interacts with OPTN. Interacts with MYO5B. Interacts with CIMAP3. Interacts with BIRC6/bruce. Interacts with OCRL. Interacts with AHI1. Interacts with DCDC1. Interacts with LRRK2; interaction facilitates phosphorylation of Thr-72. Interacts with RAB31P, GDI1, GDI2, CHM, CHML, RABGGTA, RABGGTB, TBC1D15 and INPP5B; these interactions are dependent on Thr-72 not being phosphorylated. Interacts with RILPL1 and RILPL2; these interactions are dependent on the phosphorylation of Thr-72 by LRRK2. Interacts with DZIP1; prevents inhibition by the GDP-dissociation inhibitor GDI2. Interacts with RAB3IP/Rabin8, RAB3IP functions as guanine exchange factor (GEF) towards RAB8A. Interacts (in GDP-bound form) with RPGR, RPGR functions as GEF towards RAB8A. Requires Mg(2+) as cofactor. Phosphorylation of Thr-72 in the switch II region by LRRK2 prevents the association of RAB regulatory proteins, including CHM, CHML and RAB GDP dissociation inhibitors GDI1 and GDI2. Phosphorylation by LRRK2 is required for localization to stressed lysosomes.

The protein localises to the cell membrane. The protein resides in the golgi apparatus. It is found in the endosome membrane. It localises to the recycling endosome membrane. Its subcellular location is the cell projection. The protein localises to the cilium. The protein resides in the cytoplasmic vesicle. It is found in the phagosome membrane. It localises to the cytoplasm. Its subcellular location is the cytoskeleton. The protein localises to the microtubule organizing center. The protein resides in the centrosome. It is found in the centriole. It localises to the cilium basal body. Its subcellular location is the midbody. The protein localises to the lysosome. It catalyses the reaction GTP + H2O = GDP + phosphate + H(+). Regulated by guanine nucleotide exchange factors (GEFs) such as RAB3IP/Rabin8 and RPGR which promote the exchange of bound GDP for free GTP, GTPase activating proteins (GAPs) which increase the GTP hydrolysis activity, and GDP dissociation inhibitors (GDIs) which inhibit the dissociation of the nucleotide from the GTPase. Activated in response to insulin. Its function is as follows. The small GTPases Rab are key regulators of intracellular membrane trafficking, from the formation of transport vesicles to their fusion with membranes. Rabs cycle between an inactive GDP-bound form and an active GTP-bound form that is able to recruit to membranes different sets of downstream effectors directly responsible for vesicle formation, movement, tethering and fusion. RAB8A is involved in polarized vesicular trafficking and neurotransmitter release. Together with RAB11A, RAB3IP, the exocyst complex, PARD3, PRKCI, ANXA2, CDC42 and DNMBP promotes transcytosis of PODXL to the apical membrane initiation sites (AMIS), apical surface formation and lumenogenesis. Regulates the compacted morphology of the Golgi. Together with MYO5B and RAB11A participates in epithelial cell polarization. Also involved in membrane trafficking to the cilium and ciliogenesis. Together with MICALL2, may also regulate adherens junction assembly. May play a role in insulin-induced transport to the plasma membrane of the glucose transporter GLUT4 and therefore play a role in glucose homeostasis. Involved in autophagy. Participates in the export of a subset of neosynthesized proteins through a Rab8-Rab10-Rab11-dependent endososomal export route. Targeted to and stabilized on stressed lysosomes through LRRK2 phosphorylation. Suppresses stress-induced lysosomal enlargement through EHBP1 and EHNP1L1 effector proteins. The chain is Ras-related protein Rab-8A from Mus musculus (Mouse).